The sequence spans 290 residues: Protein EURL homolog (290 aa).

The interval 185-206 (SHSQAQKTEETSSGPEGTIQTQ) is disordered. Positions 228-251 (AKLQQRIQEVFEELTHQVQEKDSL) form a coiled coil.

It belongs to the EURL family. As to quaternary structure, interacts with CCDC85B. In terms of tissue distribution, expressed in brain (at protein level). Expressed in neural progenitor cells and postmitotic neurons of the embryonic cerebral cortex.

In terms of biological role, plays a role in cortical progenitor cell proliferation and differentiation. Promotes dendritic spine development of post-migratory cortical projection neurons by modulating the beta-catenin signaling pathway. This chain is Protein EURL homolog, found in Mus musculus (Mouse).